We begin with the raw amino-acid sequence, 460 residues long: Putative E3 ubiquitin-protein ligase RING1b (460 aa).

The segment at 1–85 (MPSLKSFSAA…SQSSSAGELS (85 aa)) is disordered. Over residues 21–31 (SEAERFNPEAV) the composition is skewed to basic and acidic residues. Acidic residues-rich tracts occupy residues 32–51 (EKEE…DEED) and 59–71 (EAED…EEED). An RING-type zinc finger spans residues 103 to 143 (CSICLGIIRKTRTVMECLHRFCRECIDKSMRLGNNECPTCR). The interval 196–300 (QVSQRQSKAL…TEQTHQRDSR (105 aa)) is disordered. Basic residues predominate over residues 220–234 (RSRRSGGGSRRRRNC). Over residues 240 to 249 (DTSEANDDDD) the composition is skewed to acidic residues. The span at 250-265 (QNKRGKDSSSDEPCER) shows a compositional bias: basic and acidic residues. Positions 276 to 290 (SSSNANNNDNCAGNG) are enriched in low complexity.

Heterodimer with RING1A. Interacts with CLF. Component of the PRC1-like complex, at least composed of RING1A, RING1B and LHP1.

It localises to the nucleus. It carries out the reaction S-ubiquitinyl-[E2 ubiquitin-conjugating enzyme]-L-cysteine + [acceptor protein]-L-lysine = [E2 ubiquitin-conjugating enzyme]-L-cysteine + N(6)-ubiquitinyl-[acceptor protein]-L-lysine.. It functions in the pathway protein modification; protein ubiquitination. Putative E3 ubiquitin-protein ligase that mediates monoubiquitination of 'Lys-119' of histone H2A (H2AK119ub), thereby playing a central role in histone code and gene regulation. Functionally, as part of the PRC1-like complex, repress class I KNOX gene expression. PcG PRC1 complex maintains the transcriptionally repressive state of many genes, including Hox genes, throughout development. PcG PRC1 complex acts via chromatin remodeling and modification of histones, rendering chromatin heritably changed in its expressibility. In Arabidopsis thaliana (Mouse-ear cress), this protein is Putative E3 ubiquitin-protein ligase RING1b (RING1B).